The chain runs to 128 residues: MDLIQQLEQEEIARLAKNIPDFAPGDTVVVNVNVVEGTRKRAQAYEGVVISRRNRGLNSNFIVRKISSGEGVERTFQLYSPLIASIEVKRRGDVRRAKLYYLRERSGKSARIKEKLPQRRVAAKQAAE.

This sequence belongs to the bacterial ribosomal protein bL19 family.

Functionally, this protein is located at the 30S-50S ribosomal subunit interface and may play a role in the structure and function of the aminoacyl-tRNA binding site. The chain is Large ribosomal subunit protein bL19 from Janthinobacterium sp. (strain Marseille) (Minibacterium massiliensis).